A 1032-amino-acid polypeptide reads, in one-letter code: UPF0182 protein sll1060 (1032 aa).

Transmembrane regions (helical) follow at residues 27-49 (WVKG…RIYV), 69-87 (WQGS…FIVF), 144-166 (VLLP…YVFI), 197-219 (FSGM…IGVL), 226-248 (PGLV…FRLL), 283-300 (WWRG…LIIL), 321-339 (HISA…EHWL), 364-386 (LPVE…WLSV), and 406-428 (IIGL…LGGW).

Belongs to the UPF0182 family.

The protein resides in the cell membrane. This is UPF0182 protein sll1060 from Synechocystis sp. (strain ATCC 27184 / PCC 6803 / Kazusa).